Consider the following 511-residue polypeptide: Cytochrome P450 4B1 (511 aa).

Position 315 (Glu315) interacts with heme. Ser436 bears the Phosphoserine mark. A heme-binding site is contributed by Cys453.

This sequence belongs to the cytochrome P450 family. It depends on heme as a cofactor. In terms of tissue distribution, detected in the liver and lung (at protein level).

The protein resides in the endoplasmic reticulum membrane. Its subcellular location is the microsome membrane. The catalysed reaction is an organic molecule + reduced [NADPH--hemoprotein reductase] + O2 = an alcohol + oxidized [NADPH--hemoprotein reductase] + H2O + H(+). In terms of biological role, cytochromes P450 are a group of heme-thiolate monooxygenases. In liver microsomes, this enzyme is involved in an NADPH-dependent electron transport pathway. It oxidizes a variety of structurally unrelated compounds, including steroids, fatty acids, and xenobiotics. The sequence is that of Cytochrome P450 4B1 (CYP4B1) from Homo sapiens (Human).